Here is a 299-residue protein sequence, read N- to C-terminus: Tryptophan prenyltransferase ComQ (299 aa).

Aspartate 67 and aspartate 71 together coordinate Mg(2+).

Belongs to the FPP/GGPP synthase family. Requires Mg(2+) as cofactor.

The protein localises to the cell membrane. The catalysed reaction is L-tryptophyl-[protein] + (2E,6E)-farnesyl diphosphate = (2S,3R)-3-farnesyl-2,3-dihydro-2,N(alpha)-cyclo-L-tryptophyl-[protein] + diphosphate. Its function is as follows. Part of a major quorum-sensing system that regulates the development of genetic competence. Involved in the maturation of the competence pheromone ComX. Acts by catalyzing the transfer of a farnesyl group on the ComX pheromone. Shows weak geranylation activity with geranyl diphosphate (GPP). This Bacillus subtilis (strain 168) protein is Tryptophan prenyltransferase ComQ.